The sequence spans 412 residues: Alanyl-tRNA editing protein Aarsd1-A (412 aa).

Residues H108, H112, C208, and H212 each coordinate Zn(2+).

This sequence belongs to the class-II aminoacyl-tRNA synthetase family. Alax-L subfamily. The cofactor is Zn(2+).

Its subcellular location is the cytoplasm. Functionally, functions in trans to edit the amino acid moiety from incorrectly charged tRNA(Ala). This Xenopus laevis (African clawed frog) protein is Alanyl-tRNA editing protein Aarsd1-A (aarsd1-a).